The following is a 243-amino-acid chain: Venom nerve growth factor 3 (243 aa).

An N-terminal signal peptide occupies residues 1-18 (MSMLCYTLIIAFLIGIWA). Residues 19 to 125 (APKSEDNVPL…ALNRNIRAKR (107 aa)) constitute a propeptide that is removed on maturation. Residues 47 to 66 (GLKTSRNTDQRHPAPKKAED) are compositionally biased toward basic and acidic residues. Positions 47 to 67 (GLKTSRNTDQRHPAPKKAEDQ) are disordered. Intrachain disulfides connect Cys-139/Cys-204, Cys-182/Cys-232, and Cys-192/Cys-234. 2 N-linked (GlcNAc...) asparagine glycosylation sites follow: Asn-148 and Asn-151.

The protein belongs to the NGF-beta family. In terms of assembly, homodimer; non-covalently linked. Expressed by the venom gland.

It localises to the secreted. Nerve growth factor is important for the development and maintenance of the sympathetic and sensory nervous systems. It stimulates division and differentiation of sympathetic and embryonic sensory neurons as well as basal forebrain cholinergic neurons in the brain. Its relevance in the snake venom is not clear. However, it has been shown to inhibit metalloproteinase-dependent proteolysis of platelet glycoprotein Ib alpha, suggesting a metalloproteinase inhibition to prevent metalloprotease autodigestion and/or protection against prey proteases. Binds a lipid between the two protein chains in the homodimer. The lipid-bound form promotes histamine relase from mouse mast cells, contrary to the lipid-free form. The sequence is that of Venom nerve growth factor 3 from Tropidechis carinatus (Australian rough-scaled snake).